The following is a 365-amino-acid chain: Oligosaccharides import ATP-binding protein MsmX (365 aa).

Positions 4–235 constitute an ABC transporter domain; it reads LRMEHIYKFY…PENVFVGGFI (232 aa). Position 37-44 (37-44) interacts with ATP; the sequence is GPSGCGKS.

It belongs to the ABC transporter superfamily. In terms of assembly, the complex involved in maltodextrin import is composed of two ATP-binding proteins (MsmX), two transmembrane proteins (MdxF and MdxG) and a solute-binding protein (MdxE). The complex involved in arabinooligosaccharides uptake is composed of two ATP-binding proteins (MsmX), two transmembrane proteins (AraP and AraQ) and a solute-binding protein (AraN). The complex involved in galactooligosaccharides uptake is composed of two ATP-binding proteins (MsmX), two transmembrane proteins (GanP and GanQ) and a solute-binding protein (GanS). The complex involved in melibiose, raffinose and stachyose import is composed of two ATP-binding proteins (MsmX), two transmembrane proteins (MelC and MelD) and a solute-binding protein (MelE). The complex involved in polygalacturonan and rhamnogalacturonan type I uptake is probably composed of two ATP-binding proteins (MsmX), two transmembrane proteins (YtcP and YteP) and a solute-binding protein (YtcQ).

The protein localises to the cell membrane. Its function is as follows. Required to energize different ABC-type saccharide transporters. Part of the MdxEFG-MsmX ABC transporter complex involved in maltodextrin import, of the AraNPQ-MsmX complex involved in arabinooligosaccharides import, of the GanPQS-MsmX complex involved in galactooligosaccharides import, and of the MelEDC-MsmX complex involved in melibiose, raffinose and stachyose import. Is probably also part of the ABC transporter complex YtcQP-YteP-MsmX involved in polygalacturonan and rhamnogalacturonan type I import during pectin degradation. Responsible for energy coupling to the transport system. This chain is Oligosaccharides import ATP-binding protein MsmX (msmX), found in Bacillus subtilis (strain 168).